Reading from the N-terminus, the 491-residue chain is UDP-N-acetylmuramate--L-alanine ligase (491 aa).

126-132 provides a ligand contact to ATP; sequence GTHGKTT.

It belongs to the MurCDEF family.

It is found in the cytoplasm. The catalysed reaction is UDP-N-acetyl-alpha-D-muramate + L-alanine + ATP = UDP-N-acetyl-alpha-D-muramoyl-L-alanine + ADP + phosphate + H(+). The protein operates within cell wall biogenesis; peptidoglycan biosynthesis. Its function is as follows. Cell wall formation. The sequence is that of UDP-N-acetylmuramate--L-alanine ligase from Shigella boydii serotype 18 (strain CDC 3083-94 / BS512).